Consider the following 459-residue polypeptide: Putrescine aminotransferase (459 aa).

Pyridoxal 5'-phosphate-binding positions include 150 to 151 (GT) and Gln274. At Lys300 the chain carries N6-(pyridoxal phosphate)lysine. Thr332 is a binding site for pyridoxal 5'-phosphate.

This sequence belongs to the class-III pyridoxal-phosphate-dependent aminotransferase family. Putrescine aminotransferase subfamily. The cofactor is pyridoxal 5'-phosphate.

The catalysed reaction is an alkane-alpha,omega-diamine + 2-oxoglutarate = an omega-aminoaldehyde + L-glutamate. It carries out the reaction putrescine + 2-oxoglutarate = 1-pyrroline + L-glutamate + H2O. It catalyses the reaction cadaverine + 2-oxoglutarate = 5-aminopentanal + L-glutamate. It participates in amine and polyamine degradation; putrescine degradation; 4-aminobutanal from putrescine (transaminase route): step 1/1. Functionally, catalyzes the aminotransferase reaction from putrescine to 2-oxoglutarate, leading to glutamate and 4-aminobutanal, which spontaneously cyclizes to form 1-pyrroline. This is the first step in one of two pathways for putrescine degradation, where putrescine is converted into 4-aminobutanoate (gamma-aminobutyrate or GABA) via 4-aminobutanal. Also functions as a cadaverine transaminase in a a L-lysine degradation pathway to succinate that proceeds via cadaverine, glutarate and L-2-hydroxyglutarate. The chain is Putrescine aminotransferase from Escherichia coli O6:H1 (strain CFT073 / ATCC 700928 / UPEC).